The chain runs to 159 residues: Ribosomal RNA large subunit methyltransferase H (159 aa).

S-adenosyl-L-methionine is bound by residues Leu-76, Gly-108, and 127–132 (FSKMTL).

This sequence belongs to the RNA methyltransferase RlmH family. Homodimer.

It localises to the cytoplasm. The catalysed reaction is pseudouridine(1915) in 23S rRNA + S-adenosyl-L-methionine = N(3)-methylpseudouridine(1915) in 23S rRNA + S-adenosyl-L-homocysteine + H(+). Functionally, specifically methylates the pseudouridine at position 1915 (m3Psi1915) in 23S rRNA. This Bacillus cereus (strain ATCC 10987 / NRS 248) protein is Ribosomal RNA large subunit methyltransferase H.